Here is a 433-residue protein sequence, read N- to C-terminus: uncharacterized protein (433 aa).

The 59-residue stretch at 1-59 (MGEEYEVEIGPVAHGGHCIARTSEGQVLFVRHALPGERVLARVTEGEEGARYLRADAVE) folds into the TRAM domain. The [4Fe-4S] cluster site is built by Cys72, Cys80, Cys83, and Cys168. S-adenosyl-L-methionine is bound by residues Gln262, Tyr291, Glu315, and Asp359. The active-site Nucleophile is Cys386.

It belongs to the class I-like SAM-binding methyltransferase superfamily. RNA M5U methyltransferase family.

This is an uncharacterized protein from Streptomyces avermitilis (strain ATCC 31267 / DSM 46492 / JCM 5070 / NBRC 14893 / NCIMB 12804 / NRRL 8165 / MA-4680).